Consider the following 513-residue polypeptide: MGHSVAGVCLEEPAVLTAFPSLLHPQDPPQQRDRILFVTAELSDFVKVGGLGDFSAALPRVLRRQHAVRVLLPGYRQVLERCSDLRILGSLPGRAAIPPCEIGLVTLDDGLEVMLVLCPLLYEREGTPYMDDQGNDWADNHLRFARLCLAAAEIAGGHGAQGWQPGLVHANDWPSALTPAYMAWNGVRTPSLFTIHNLAYQGLCDLQCSAELGLPDEALSPESMEFHGRLSFLKAGIAHAHHITTVSETYAQEITTPEYGCGLHGILKCKVEKRQLSGIVNGIDDSWQPHCDPHLVAGFSARQWAGKRANTRYVEERFGLEPGKGPLFAVVSRLVQQKGIDLTLEISDALLQAGGRLVSIGRGEPSLEKAMLDLSRRHPGQVGVHIGFDETDARRIYAGSDFLLMPSRYEPCGLSQLYAQCFGSLPIARCTGGLADTIVDGVTGFLFREETAQSYLDAVLRAINVYHCPALLNAMRCKAMAAPMFWRDSVEPYNRLYRRLLRNTAPAWRGVRP.

K47 is a binding site for ADP-alpha-D-glucose.

Belongs to the glycosyltransferase 1 family. Bacterial/plant glycogen synthase subfamily.

It carries out the reaction [(1-&gt;4)-alpha-D-glucosyl](n) + ADP-alpha-D-glucose = [(1-&gt;4)-alpha-D-glucosyl](n+1) + ADP + H(+). The protein operates within glycan biosynthesis; glycogen biosynthesis. In terms of biological role, synthesizes alpha-1,4-glucan chains using ADP-glucose. The chain is Glycogen synthase from Pseudomonas paraeruginosa (strain DSM 24068 / PA7) (Pseudomonas aeruginosa (strain PA7)).